A 468-amino-acid polypeptide reads, in one-letter code: Probable citrate synthase, mitochondrial (468 aa).

Catalysis depends on residues His-303, His-349, and Asp-404.

It belongs to the citrate synthase family. In terms of assembly, homodimer.

It localises to the mitochondrion matrix. The enzyme catalyses oxaloacetate + acetyl-CoA + H2O = citrate + CoA + H(+). It participates in carbohydrate metabolism; tricarboxylic acid cycle; isocitrate from oxaloacetate: step 1/2. The protein is Probable citrate synthase, mitochondrial (cts-1) of Caenorhabditis briggsae.